The following is a 141-amino-acid chain: Auxin-responsive protein SAUR64 (141 aa).

The protein belongs to the ARG7 family.

Its subcellular location is the cell membrane. Functionally, may promote auxin-stimulated organ elongation, such as hypocotyls, stamen filaments and petals. This Arabidopsis thaliana (Mouse-ear cress) protein is Auxin-responsive protein SAUR64.